The following is a 255-amino-acid chain: MDYSNFGNSASKKFQDDTLNRVRKEHEEALKKLREENFSSNTSELGNKKHYRAQERMSSPLHRLSPTGKSDDRKVKSPLDDKLRRQLREGNTRLPPPPFSSYGMPPTNRSNLDRIRRRTSSPVRTDKFASQNVIDDQRLEIKYLERIVYDQGTVIDNLTSRITRLESFILNSISDRGDKNFASLEHSRSFSGFPTNKTYGLQMGGLYENDMPYRRSSDNINKEGAREDRSSQIHIENESTEDILKNIVFVFSQLN.

A compositionally biased stretch (polar residues) spans 1–12 (MDYSNFGNSASK). Disordered regions lie at residues 1 to 20 (MDYS…DTLN), 31 to 123 (KKLR…SSPV), and 210 to 231 (DMPY…DRSS). Threonine 18 carries the phosphothreonine modification. Serine 65 is subject to Phosphoserine. Basic and acidic residues-rich tracts occupy residues 69-91 (KSDD…REGN) and 211-231 (MPYR…DRSS). Threonine 240 is subject to Phosphothreonine; by MPS1.

The protein belongs to the SPC29 family. As to quaternary structure, component of the SPC110 complex containing at least CMD1, SPC29, SPC42 and SCP110. Interacts with BBP1. MPS1-mediated phosphorylation at Thr-240 is required for spindle pole body duplication.

The protein resides in the nucleus. Its subcellular location is the cytoplasm. It is found in the cytoskeleton. It localises to the microtubule organizing center. The protein localises to the spindle pole body. In terms of biological role, component of the spindle pole body (SPB) required for the proper execution of spindle pole body (SPB) duplication. Links the central plaque component SPC42 to the inner plaque component SPC110. In Saccharomyces cerevisiae (strain AWRI796) (Baker's yeast), this protein is Spindle pole component 29 (SPC29).